The chain runs to 751 residues: C2 domain-containing protein At1g53590 (751 aa).

2 helical membrane passes run 2–22 and 26–46; these read ESSLIHHIIIVLLLLWFISSL and HAFFYFLALIYLYLVHERYVM. An SMP-LTD domain is found at 68 to 262; that stretch reads DSESVRWMNY…QPNMLVVDME (195 aa). The 115-residue stretch at 267–381 folds into the C2 domain; sequence PTSENWFFVD…RGGQRNDMWL (115 aa). Positions 298, 304, 352, 354, and 359 each coordinate Ca(2+). Disordered stretches follow at residues 469–519 and 572–751; these read QIWE…GRGL and SGPL…SSSK. Basic and acidic residues predominate over residues 472 to 482; that stretch reads EPRKGKSRRLD. A compositionally biased stretch (polar residues) spans 483–502; sequence SQIQRTPNDESLSNGSSSTD. A compositionally biased stretch (basic and acidic residues) spans 590–611; that stretch reads NSGKGHMKDVAKSFLKQAEKSA. The segment covering 612-624 has biased composition (basic residues); that stretch reads KQIKHAFSRKGSM. The span at 625 to 634 shows a compositional bias: basic and acidic residues; it reads KPRDGHKEIV. A compositionally biased stretch (acidic residues) spans 639-651; the sequence is SGTDSESSDDDDA. Composition is skewed to basic and acidic residues over residues 664–681 and 703–751; these read KLTRDGNIERTGDDDHVD and VEAK…SSSK. The stretch at 701-728 forms a coiled coil; sequence TDVEAKEEKLKEAAESETRDMDTAMNIK.

The protein belongs to the extended synaptotagmin family. The cofactor is Ca(2+).

Its subcellular location is the membrane. The polypeptide is C2 domain-containing protein At1g53590 (NTMC2T6.1) (Arabidopsis thaliana (Mouse-ear cress)).